Reading from the N-terminus, the 459-residue chain is Cysteine--tRNA ligase (459 aa).

C27 lines the Zn(2+) pocket. The 'HIGH' region motif lies at 29-39; the sequence is VTVYDDCHIGH. Positions 208, 233, and 237 each coordinate Zn(2+). Residues 265–269 carry the 'KMSKS' region motif; it reads KMSKS. K268 serves as a coordination point for ATP.

Belongs to the class-I aminoacyl-tRNA synthetase family. Monomer. Zn(2+) serves as cofactor.

It is found in the cytoplasm. It catalyses the reaction tRNA(Cys) + L-cysteine + ATP = L-cysteinyl-tRNA(Cys) + AMP + diphosphate. This is Cysteine--tRNA ligase from Francisella tularensis subsp. mediasiatica (strain FSC147).